The following is a 205-amino-acid chain: Protein Nef (205 aa).

Gly-2 carries N-myristoyl glycine; by host lipidation. Ser-6 carries the phosphoserine; by host modification. Positions Asp-62–Glu-65 are acidic; interacts with host PACS1 and PACS2; stabilizes the interaction of NEF/MHC-I with host AP1M1; necessary for MHC-I internalization. Residues Pro-69–Pro-78 are SH3-binding; interaction with Src family tyrosine kinases. Residues Pro-72–Pro-75 carry the PxxP; stabilizes the interaction of NEF/MHC-I with host AP1M1; necessary for MHC-I internalization motif. Residues Glu-108–Trp-124 form a mediates dimerization, Nef-PTE1 interaction region. The interval Leu-148–Val-180 is binding to ATP6V1H. The Dileucine internalization motif; necessary for CD4 internalization signature appears at Leu-164–Leu-165. A Diacidic; necessary for CD4 internalization motif is present at residues Glu-174–Asp-175.

Belongs to the lentivirus primate group Nef protein family. Monomer; cytosolic form. Homodimer; membrane bound form. Interacts with Nef associated p21-activated kinase (PAK2); this interaction activates PAK2. Associates with the Nef-MHC-I-AP1 complex; this complex is required for MHC-I internalization. Interacts (via C-terminus) with host PI3-kinase. Interacts with host PACS1; this interaction seems to be weak. Interacts with host PACS2. Interacts with host LCK and MAPK3; these interactions inhibit the kinase activity of the latter. Interacts with host ATP6V1H; this interaction may play a role in CD4 endocytosis. Associates with the CD4-Nef-AP2 complex; this complex is required for CD4 internalization. Interacts with host AP2 subunit alpha and AP2 subunit sigma2. Interacts with TCR-zeta chain; this interaction up-regulates the Fas ligand (FasL) surface expression. Interacts with host HCK, LYN, and SRC; these interactions activate the Src family kinases. Interacts with MAP3K5; this interaction inhibits the Fas and TNFR-mediated death signals. Interacts with beta-COP and PTE1. Interacts with human RACK1; this increases Nef phosphorylation by PKC. Interacts with TP53; this interaction decreases the half-life of TP53, protecting the infected cell against p53-mediated apoptosis. The virion-associated Nef proteins are cleaved by the viral protease to release the soluble C-terminal core protein. Nef is probably cleaved concomitantly with viral structural proteins on maturation of virus particles. In terms of processing, myristoylated. Post-translationally, phosphorylated on serine residues, probably by host PKCdelta and theta.

Its subcellular location is the host cell membrane. The protein localises to the virion. The protein resides in the secreted. It localises to the host Golgi apparatus membrane. Functionally, factor of infectivity and pathogenicity, required for optimal virus replication. Alters numerous pathways of T-lymphocyte function and down-regulates immunity surface molecules in order to evade host defense and increase viral infectivity. Alters the functionality of other immunity cells, like dendritic cells, monocytes/macrophages and NK cells. Its function is as follows. In infected CD4(+) T-lymphocytes, down-regulates the surface MHC-I, mature MHC-II, CD4, CD28, CCR5 and CXCR4 molecules. Mediates internalization and degradation of host CD4 through the interaction of with the cytoplasmic tail of CD4, the recruitment of AP-2 (clathrin adapter protein complex 2), internalization through clathrin coated pits, and subsequent transport to endosomes and lysosomes for degradation. Diverts host MHC-I molecules to the trans-Golgi network-associated endosomal compartments by an endocytic pathway to finally target them for degradation. MHC-I down-regulation may involve AP-1 (clathrin adapter protein complex 1) or possibly Src family kinase-ZAP70/Syk-PI3K cascade recruited by PACS2. In consequence infected cells are masked for immune recognition by cytotoxic T-lymphocytes. Decreasing the number of immune receptors also prevents reinfection by more HIV particles (superinfection). Down-regulates host SERINC3 and SERINC5 thereby excluding these proteins from the viral particles. Virion infectivity is drastically higher when SERINC3 or SERINC5 are excluded from the viral envelope, because these host antiviral proteins impair the membrane fusion event necessary for subsequent virion penetration. Bypasses host T-cell signaling by inducing a transcriptional program nearly identical to that of anti-CD3 cell activation. Interaction with TCR-zeta chain up-regulates the Fas ligand (FasL). Increasing surface FasL molecules and decreasing surface MHC-I molecules on infected CD4(+) cells send attacking cytotoxic CD8+ T-lymphocytes into apoptosis. In terms of biological role, plays a role in optimizing the host cell environment for viral replication without causing cell death by apoptosis. Protects the infected cells from apoptosis in order to keep them alive until the next virus generation is ready to strike. Inhibits the Fas and TNFR-mediated death signals by blocking MAP3K5/ASK1. Decreases the half-life of TP53, protecting the infected cell against p53-mediated apoptosis. Inhibits the apoptotic signals regulated by the Bcl-2 family proteins through the formation of a Nef/PI3-kinase/PAK2 complex that leads to activation of PAK2 and induces phosphorylation of host BAD. Functionally, extracellular Nef protein targets CD4(+) T-lymphocytes for apoptosis by interacting with CXCR4 surface receptors. In Simian immunodeficiency virus (isolate CPZ GAB1) (SIV-cpz), this protein is Protein Nef.